A 21-amino-acid polypeptide reads, in one-letter code: Snake venom serine protease jerdonase (21 aa).

Residues 1 to 21 form the Peptidase S1 domain; the sequence is IIGGDECNINEHPFLVALYDA.

Belongs to the peptidase S1 family. Snake venom subfamily. As to quaternary structure, monomer. In terms of processing, glycosylated; contains 35.8% neutral carbohydrate. Expressed by the venom gland.

The protein localises to the secreted. Inhibited by PMSF and soybean trypsin inhibitor. Partially inhibited by L-cysteine and DTT. Not affected by EDTA. Multifunctional venom serine protease that has fibrino(geno)lytic activity towards the A alpha-chain of human fibrinogen (FGA) and a slow activity towards the B beta-chain (FGB). Also hydrolyzes bovine low-molecular-mass kininogen and releases bradykinin. Catalyzes the hydrolysis of BAEE, S-2238 and S-2302. The protein is Snake venom serine protease jerdonase of Protobothrops jerdonii (Jerdon's pitviper).